A 328-amino-acid chain; its full sequence is tRNA U34 carboxymethyltransferase (328 aa).

Carboxy-S-adenosyl-L-methionine is bound by residues K91, W105, K110, G130, 181–182 (IE), M196, Y200, and R315.

This sequence belongs to the class I-like SAM-binding methyltransferase superfamily. CmoB family. In terms of assembly, homotetramer.

It catalyses the reaction carboxy-S-adenosyl-L-methionine + 5-hydroxyuridine(34) in tRNA = 5-carboxymethoxyuridine(34) in tRNA + S-adenosyl-L-homocysteine + H(+). Functionally, catalyzes carboxymethyl transfer from carboxy-S-adenosyl-L-methionine (Cx-SAM) to 5-hydroxyuridine (ho5U) to form 5-carboxymethoxyuridine (cmo5U) at position 34 in tRNAs. The sequence is that of tRNA U34 carboxymethyltransferase from Pectobacterium carotovorum subsp. carotovorum (strain PC1).